Consider the following 153-residue polypeptide: MSKVGYTAEFDPATTAKAMAYEINVSPKHCQEICRQIRGMKLSAAKTYLQDVIDKKRSVPFKQHARNVGHKRHQSGWPSGRYPVKASTEILKLLKHAEANAEYKGLETENMRIIHSTSKKGRVIQGIMPRAMGRATAWNIELVTVEVVIGEVR.

Belongs to the universal ribosomal protein uL22 family. In terms of assembly, part of the 50S ribosomal subunit.

In terms of biological role, this protein binds specifically to 23S rRNA. It makes multiple contacts with different domains of the 23S rRNA in the assembled 50S subunit and ribosome. Its function is as follows. The globular domain of the protein is located near the polypeptide exit tunnel on the outside of the subunit, while an extended beta-hairpin is found that lines the wall of the exit tunnel in the center of the 70S ribosome. The sequence is that of Large ribosomal subunit protein uL22 from Methanocella arvoryzae (strain DSM 22066 / NBRC 105507 / MRE50).